The sequence spans 196 residues: ATP-dependent Clp protease proteolytic subunit (196 aa).

S98 functions as the Nucleophile in the catalytic mechanism. H123 is a catalytic residue.

It belongs to the peptidase S14 family. As to quaternary structure, fourteen ClpP subunits assemble into 2 heptameric rings which stack back to back to give a disk-like structure with a central cavity, resembling the structure of eukaryotic proteasomes.

Its subcellular location is the cytoplasm. It catalyses the reaction Hydrolysis of proteins to small peptides in the presence of ATP and magnesium. alpha-casein is the usual test substrate. In the absence of ATP, only oligopeptides shorter than five residues are hydrolyzed (such as succinyl-Leu-Tyr-|-NHMec, and Leu-Tyr-Leu-|-Tyr-Trp, in which cleavage of the -Tyr-|-Leu- and -Tyr-|-Trp bonds also occurs).. Its function is as follows. Cleaves peptides in various proteins in a process that requires ATP hydrolysis. Has a chymotrypsin-like activity. Plays a major role in the degradation of misfolded proteins. The chain is ATP-dependent Clp protease proteolytic subunit from Lactiplantibacillus plantarum (strain ATCC BAA-793 / NCIMB 8826 / WCFS1) (Lactobacillus plantarum).